Here is a 365-residue protein sequence, read N- to C-terminus: Decapping nuclease RAI1 (365 aa).

Glu-165 contacts a divalent metal cation. Cys-197 and Glu-214 together coordinate substrate. A divalent metal cation-binding residues include Asp-216, Glu-234, and Leu-235. The substrate site is built by Lys-236 and Gln-260.

Belongs to the DXO/Dom3Z family. In terms of assembly, interacts with rat1; the interaction is direct, stabilizes rat1 protein structure and stimulates its exoribonuclease activity. The interaction also stimulates rai1 pyrophosphohydrolase activity, probably by recruiting it to mRNA substrates. A divalent metal cation serves as cofactor.

It is found in the nucleus. The catalysed reaction is a 5'-end NAD(+)-phospho-ribonucleoside in mRNA + H2O = a 5'-end phospho-ribonucleoside in mRNA + NAD(+) + H(+). The enzyme catalyses a 5'-end (N(7)-methyl 5'-triphosphoguanosine)-ribonucleoside-ribonucleotide in mRNA + H2O = a (N(7)-methyl 5'-triphosphoguanosine)-nucleoside + a 5'-end phospho-ribonucleoside in mRNA + H(+). It catalyses the reaction a 5'-end triphospho-ribonucleoside in mRNA + H2O = a 5'-end phospho-ribonucleoside in mRNA + diphosphate + H(+). Its function is as follows. Decapping enzyme for NAD-capped RNAs: specifically hydrolyzes the nicotinamide adenine dinucleotide (NAD) cap from a subset of RNAs by removing the entire NAD moiety from the 5'-end of an NAD-capped RNA. The NAD-cap is present at the 5'-end of some RNAs and snoRNAs. In contrast to the canonical 5'-end N7 methylguanosine (m7G) cap, the NAD cap promotes mRNA decay. Also acts as a non-canonical decapping enzyme that removes the entire cap structure of m7G capped or incompletely capped RNAs. Has decapping activity toward incomplete 5'-end m7G cap mRNAs such as unmethylated 5'-end-capped RNA (cap0), while it has no activity toward 2'-O-ribose methylated m7G cap (cap1). Also possesses RNA 5'-pyrophosphohydrolase activity by hydrolyzing the 5'-end triphosphate to release pyrophosphates. Stimulates exoribonuclease activity of Rat1, allowing it to degrade RNAs with stable secondary structure more effectively. This Aspergillus fumigatus (strain ATCC MYA-4609 / CBS 101355 / FGSC A1100 / Af293) (Neosartorya fumigata) protein is Decapping nuclease RAI1 (rai1).